A 345-amino-acid chain; its full sequence is Protein lifeguard 1 (345 aa).

Residues M1–S115 are disordered. Pro residues-rich tracts occupy residues A24–P46 and G79–Q98. Helical transmembrane passes span V139–F159, V171–C191, L202–F222, A227–M247, M257–I277, I281–D301, and F320–I340.

Belongs to the BI1 family. LFG subfamily.

It localises to the membrane. Functionally, potential apoptotic regulator. In Mus musculus (Mouse), this protein is Protein lifeguard 1 (Grina).